A 183-amino-acid chain; its full sequence is Large ribosomal subunit protein uL6 (183 aa).

The protein belongs to the universal ribosomal protein uL6 family. As to quaternary structure, part of the 50S ribosomal subunit.

Its function is as follows. This protein binds to the 23S rRNA, and is important in its secondary structure. It is located near the subunit interface in the base of the L7/L12 stalk, and near the tRNA binding site of the peptidyltransferase center. This is Large ribosomal subunit protein uL6 from Methanococcus aeolicus (strain ATCC BAA-1280 / DSM 17508 / OCM 812 / Nankai-3).